Reading from the N-terminus, the 192-residue chain is Superoxide dismutase [Fe] (192 aa).

Fe cation is bound by residues H26, H73, D157, and H161.

Belongs to the iron/manganese superoxide dismutase family. As to quaternary structure, homodimer. The cofactor is Fe cation.

The catalysed reaction is 2 superoxide + 2 H(+) = H2O2 + O2. Destroys superoxide anion radicals which are normally produced within the cells and which are toxic to biological systems. In Pseudoalteromonas translucida (strain TAC 125), this protein is Superoxide dismutase [Fe].